A 314-amino-acid polypeptide reads, in one-letter code: MTTLSFHHVTVLMDEAVQGLNIRPGGIYVDCTLGGAGHSSLIASKLTEGGRLIAIDQDDWALDNARERLASYMDRVTLVKSNFRHIKDIVKDLGLSGVDGVLFDLGVSSPQLDEGERGFSYNADAPLDMRMDQQAPLSAYDIINEWDEEEIAKIIWLYGEEKFSRRIARQIVQQRKKQPIQTTGELVELIKEGIPAAARRTGPHPAKRTFQAIRIAVNDELDAFKEAVVDAIEVLNPEGRVSVITFHSLEDRICKQIYQDFSKGCTCPPAFPICTCGNKAVVKVITRKPILPSEEELEANKRARSAKLRVAEKL.

S-adenosyl-L-methionine contacts are provided by residues 36–38 (AGH), aspartate 56, phenylalanine 83, aspartate 104, and glutamine 111.

Belongs to the methyltransferase superfamily. RsmH family.

The protein resides in the cytoplasm. The catalysed reaction is cytidine(1402) in 16S rRNA + S-adenosyl-L-methionine = N(4)-methylcytidine(1402) in 16S rRNA + S-adenosyl-L-homocysteine + H(+). Specifically methylates the N4 position of cytidine in position 1402 (C1402) of 16S rRNA. This chain is Ribosomal RNA small subunit methyltransferase H, found in Brevibacillus brevis (strain 47 / JCM 6285 / NBRC 100599).